The chain runs to 3063 residues: Genome polyprotein (3063 aa).

The 144-residue stretch at Lys141 to Phe284 folds into the Peptidase S30 domain. Active-site for P1 proteinase activity residues include His192, Asp201, and Ser235. The Involved in interaction with stylet and aphid transmission signature appears at Lys334 to Cys337. Residues Pro592–Lys594 carry the Involved in virions binding and aphid transmission motif. The Peptidase C6 domain maps to Leu618 to Gly740. Catalysis depends on for helper component proteinase activity residues Cys626 and His699. Residues Asp1229 to Glu1381 enclose the Helicase ATP-binding domain. Gly1242–Ser1249 is a binding site for ATP. The short motif at Asp1331–His1334 is the DECH box element. In terms of domain architecture, Helicase C-terminal spans Asp1400 to Ser1559. A Nuclear localization signal motif is present at residues Arg1884–Thr1892. Tyr1907 bears the O-(5'-phospho-RNA)-tyrosine mark. An interaction with host EIF4E region spans residues Lys1949–Asn1964. In terms of domain architecture, Peptidase C4 spans Ala2032–Asp2250. Catalysis depends on for nuclear inclusion protein A activity residues His2077, Asp2112, and Cys2182. Residues Trp2519–Leu2643 enclose the RdRp catalytic domain. The interval Asn2798 to Pro2841 is disordered. Thr3046 bears the Phosphothreonine mark.

The protein belongs to the potyviridae genome polyprotein family. In terms of assembly, interacts with host eIF4E protein (via cap-binding region); this interaction mediates the translation of the VPg-viral RNA conjugates. Part of a complex that comprises VPg, RNA, host EIF4E and EIF4G; this interaction mediates the translation of the VPg-viral RNA conjugates. Interaction is possible in susceptible hosts but impaired in resistant plants: the VPg of strain LYE84 interacts with tomato eIF4E1 and eIF4E2 as well as with the Capsicum annuum eIF4E1 susceptible allele pvr2(+) but not with resistant alleles pvr2(1), pvr2(2), pvr2(3), pvr2(4), pvr2(5), pvr2(6), pvr2(7), pvr2(8) and pvr2(9), the VPg of strain SON41 interacts with C.annuum eIF4E1 susceptible alleles pvr2(+), pvr2(1), pvr2(2), pvr2(3) and pvr2(4) but not with resistant alleles pvr2(5), pvr2(6), pvr2(7), pvr2(8) and pvr2(9), the VPg of strain LYE90 interacts only with tomato eIF4E1. VPg is uridylylated by the polymerase and is covalently attached to the 5'-end of the genomic RNA. This uridylylated form acts as a nucleotide-peptide primer for the polymerase. Post-translationally, potyviral RNA is expressed as two polyproteins which undergo post-translational proteolytic processing. Genome polyprotein is processed by NIa-pro, P1 and HC-pro proteinases resulting in the production of at least ten individual proteins. P3N-PIPO polyprotein is cleaved by P1 and HC-pro proteinases resulting in the production of three individual proteins. The P1 proteinase and the HC-pro cleave only their respective C-termini autocatalytically. 6K1 is essential for proper proteolytic separation of P3 from CI.

The protein resides in the host cytoplasmic vesicle. The protein localises to the host nucleus. Its subcellular location is the virion. The catalysed reaction is RNA(n) + a ribonucleoside 5'-triphosphate = RNA(n+1) + diphosphate. It catalyses the reaction Hydrolyzes glutaminyl bonds, and activity is further restricted by preferences for the amino acids in P6 - P1' that vary with the species of potyvirus, e.g. Glu-Xaa-Xaa-Tyr-Xaa-Gln-|-(Ser or Gly) for the enzyme from tobacco etch virus. The natural substrate is the viral polyprotein, but other proteins and oligopeptides containing the appropriate consensus sequence are also cleaved.. It carries out the reaction Hydrolyzes a Gly-|-Gly bond at its own C-terminus, commonly in the sequence -Tyr-Xaa-Val-Gly-|-Gly, in the processing of the potyviral polyprotein.. Functionally, required for aphid transmission and also has proteolytic activity. Only cleaves a Gly-Gly dipeptide at its own C-terminus. Interacts with virions and aphid stylets. Acts as a suppressor of RNA-mediated gene silencing, also known as post-transcriptional gene silencing (PTGS), a mechanism of plant viral defense that limits the accumulation of viral RNAs. May have RNA-binding activity. In terms of biological role, has helicase activity. It may be involved in replication. Its function is as follows. Indispensable for virus replication. Reduces the abundance of host transcripts related to jasmonic acid biosynthesis therefore altering the host defenses. In order to increase its own stability, decreases host protein degradation pathways. Indispensable for virus replication. Functionally, mediates the cap-independent, EIF4E-dependent translation of viral genomic RNAs. Binds to the cap-binding site of host EIF4E and thus interferes with the host EIF4E-dependent mRNA export and translation. VPg-RNA directly binds EIF4E and is a template for transcription. Also forms trimeric complexes with EIF4E-EIF4G, which are templates for translation. In terms of biological role, has RNA-binding and proteolytic activities. Its function is as follows. An RNA-dependent RNA polymerase that plays an essential role in the virus replication. Involved in aphid transmission, cell-to-cell and systemis movement, encapsidation of the viral RNA and in the regulation of viral RNA amplification. The sequence is that of Genome polyprotein from Potato virus Y (strain N) (PVY).